We begin with the raw amino-acid sequence, 802 residues long: G-type lectin S-receptor-like serine/threonine-protein kinase At1g61550 (802 aa).

A signal peptide spans 1–19 (MTRFACFLFSTLLLSFSYA). One can recognise a Bulb-type lectin domain in the interval 20–139 (AITPTSPLSI…VSGITLWQSF (120 aa)). At 20–421 (AITPTSPLSI…EMGGNQRKKT (402 aa)) the chain is on the extracellular side. Residues asparagine 48, asparagine 89, asparagine 112, asparagine 231, and asparagine 262 are each glycosylated (N-linked (GlcNAc...) asparagine). Positions 273-309 (PANTCDFYGVCGPFGLCVMSIPPKCKCFKGFVPQFSE) constitute an EGF-like domain. Disulfide bonds link cysteine 277-cysteine 289 and cysteine 283-cysteine 297. 3 N-linked (GlcNAc...) asparagine glycosylation sites follow: asparagine 315, asparagine 331, and asparagine 370. A PAN domain is found at 328–410 (CQGNSTGRHV…GELLSIRLAS (83 aa)). Disulfide bonds link cysteine 363–cysteine 384 and cysteine 367–cysteine 373. Residues 422 to 442 (IIASIVSISLFVTLASAAFGF) form a helical membrane-spanning segment. The Cytoplasmic segment spans residues 443–802 (WRYRLKHNAI…EVTQSVVLGR (360 aa)). Residues 489–774 (FSLVNKLGQG…DLPLPKEPTF (286 aa)) form the Protein kinase domain. Residues 495–503 (LGQGGFGPV) and lysine 517 contribute to the ATP site. Phosphoserine occurs at positions 523 and 538. The caM-binding stretch occupies residues 578-595 (RKRVEIDWPKRFSIIQGI). The active-site Proton acceptor is aspartate 614. Serine 618 and serine 631 each carry phosphoserine. Position 648 is a phosphothreonine (threonine 648). At serine 691 the chain carries Phosphoserine.

This sequence belongs to the protein kinase superfamily. Ser/Thr protein kinase family.

It localises to the cell membrane. It catalyses the reaction L-seryl-[protein] + ATP = O-phospho-L-seryl-[protein] + ADP + H(+). The enzyme catalyses L-threonyl-[protein] + ATP = O-phospho-L-threonyl-[protein] + ADP + H(+). This is G-type lectin S-receptor-like serine/threonine-protein kinase At1g61550 from Arabidopsis thaliana (Mouse-ear cress).